Here is a 311-residue protein sequence, read N- to C-terminus: N-acetyl-gamma-glutamyl-phosphate reductase (311 aa).

Residue C117 is part of the active site.

This sequence belongs to the NAGSA dehydrogenase family. Type 2 subfamily.

The protein localises to the cytoplasm. It carries out the reaction N-acetyl-L-glutamate 5-semialdehyde + phosphate + NADP(+) = N-acetyl-L-glutamyl 5-phosphate + NADPH + H(+). Its pathway is amino-acid biosynthesis; L-arginine biosynthesis; N(2)-acetyl-L-ornithine from L-glutamate: step 3/4. Catalyzes the NADPH-dependent reduction of N-acetyl-5-glutamyl phosphate to yield N-acetyl-L-glutamate 5-semialdehyde. The sequence is that of N-acetyl-gamma-glutamyl-phosphate reductase from Brucella anthropi (strain ATCC 49188 / DSM 6882 / CCUG 24695 / JCM 21032 / LMG 3331 / NBRC 15819 / NCTC 12168 / Alc 37) (Ochrobactrum anthropi).